A 1064-amino-acid chain; its full sequence is Carbamoyl phosphate synthase pyrimidine-specific large chain (1064 aa).

The interval 1 to 401 is carboxyphosphate synthetic domain; the sequence is MPKRRDIETI…SLLKAVRSLE (401 aa). 11 residues coordinate ATP: R129, R169, G175, G176, R208, I210, G241, I242, H243, Q284, and E298. The ATP-grasp 1 domain occupies 133-327; the sequence is RALMNELGEP…IAKLAAKIAV (195 aa). Residues Q284, E298, and N300 each coordinate Mg(2+). The Mn(2+) site is built by Q284, E298, and N300. The oligomerization domain stretch occupies residues 402 to 546; the sequence is IGVHHLELNE…YSTYEEENES (145 aa). The tract at residues 547–929 is carbamoyl phosphate synthetic domain; that stretch reads IVTEKPSVIV…ALYKGLVASG (383 aa). In terms of domain architecture, ATP-grasp 2 spans 671–861; it reads EQALSELGIP…MANLATKAIL (191 aa). Positions 707, 746, 748, 752, 777, 778, 779, 780, 820, and 832 each coordinate ATP. Q820, E832, and N834 together coordinate Mg(2+). 3 residues coordinate Mn(2+): Q820, E832, and N834. The region spanning 930-1064 is the MGS-like domain; sequence IQIQPHGAVL…TAMTEGLVRS (135 aa). Residues 930-1064 form an allosteric domain region; sequence IQIQPHGAVL…TAMTEGLVRS (135 aa).

This sequence belongs to the CarB family. In terms of assembly, composed of two chains; the small (or glutamine) chain promotes the hydrolysis of glutamine to ammonia, which is used by the large (or ammonia) chain to synthesize carbamoyl phosphate. Tetramer of heterodimers (alpha,beta)4. Requires Mg(2+) as cofactor. It depends on Mn(2+) as a cofactor.

The catalysed reaction is hydrogencarbonate + L-glutamine + 2 ATP + H2O = carbamoyl phosphate + L-glutamate + 2 ADP + phosphate + 2 H(+). It catalyses the reaction hydrogencarbonate + NH4(+) + 2 ATP = carbamoyl phosphate + 2 ADP + phosphate + 2 H(+). The protein operates within amino-acid biosynthesis; L-arginine biosynthesis; carbamoyl phosphate from bicarbonate: step 1/1. It participates in pyrimidine metabolism; UMP biosynthesis via de novo pathway; (S)-dihydroorotate from bicarbonate: step 1/3. In terms of biological role, small subunit of the glutamine-dependent carbamoyl phosphate synthetase (CPSase). CPSase catalyzes the formation of carbamoyl phosphate from the ammonia moiety of glutamine, carbonate, and phosphate donated by ATP, constituting the first step of the biosynthetic pathway leading to pyrimidine nucleotides. The large subunit (synthetase) binds the substrates ammonia (free or transferred from glutamine from the small subunit), hydrogencarbonate and ATP and carries out an ATP-coupled ligase reaction, activating hydrogencarbonate by forming carboxy phosphate which reacts with ammonia to form carbamoyl phosphate. This chain is Carbamoyl phosphate synthase pyrimidine-specific large chain (pyrAB), found in Geobacillus stearothermophilus (Bacillus stearothermophilus).